A 431-amino-acid chain; its full sequence is uncharacterized protein (431 aa).

Residues 1–258 (MPSQMREAIT…HGLIDLERAG (258 aa)) enclose the Peptidase S8 domain.

It belongs to the peptidase S8 family.

This is an uncharacterized protein from Sinorhizobium fredii (strain NBRC 101917 / NGR234).